A 100-amino-acid polypeptide reads, in one-letter code: RxLR effector protein PITG_18683 (100 aa).

Positions 1–22 (MRSFLYGILAFAVLARSSAVAA) are cleaved as a signal peptide. A RxLR-dEER motif is present at residues 43 to 57 (RSLRVEAQEVIQSGR). The short motif at 78 to 82 (KPDIK) is the Calmodulin-binding motif element.

Belongs to the RxLR effector family. In terms of assembly, interacts with the host calmodulin.

The protein localises to the secreted. The protein resides in the host cell. In terms of biological role, secreted effector that associates with calmodulin to interfere with plant defense-associated calcium signaling in hosts. In Phytophthora infestans (strain T30-4) (Potato late blight agent), this protein is RxLR effector protein PITG_18683.